Here is an 81-residue protein sequence, read N- to C-terminus: Photosystem I iron-sulfur center (81 aa).

4Fe-4S ferredoxin-type domains follow at residues 2 to 31 (SHSV…MVPW) and 39 to 68 (IASA…VRVY). Residues Cys-11, Cys-14, Cys-17, Cys-21, Cys-48, Cys-51, Cys-54, and Cys-58 each coordinate [4Fe-4S] cluster.

As to quaternary structure, the eukaryotic PSI reaction center is composed of at least 11 subunits. Requires [4Fe-4S] cluster as cofactor.

The protein localises to the plastid. It localises to the chloroplast thylakoid membrane. The enzyme catalyses reduced [plastocyanin] + hnu + oxidized [2Fe-2S]-[ferredoxin] = oxidized [plastocyanin] + reduced [2Fe-2S]-[ferredoxin]. In terms of biological role, apoprotein for the two 4Fe-4S centers FA and FB of photosystem I (PSI); essential for photochemical activity. FB is the terminal electron acceptor of PSI, donating electrons to ferredoxin. The C-terminus interacts with PsaA/B/D and helps assemble the protein into the PSI complex. Required for binding of PsaD and PsaE to PSI. PSI is a plastocyanin/cytochrome c6-ferredoxin oxidoreductase, converting photonic excitation into a charge separation, which transfers an electron from the donor P700 chlorophyll pair to the spectroscopically characterized acceptors A0, A1, FX, FA and FB in turn. In Pleurastrum terricola (Filamentous green alga), this protein is Photosystem I iron-sulfur center.